Here is a 585-residue protein sequence, read N- to C-terminus: Acetolactate synthase large subunit (585 aa).

Thiamine diphosphate is bound at residue glutamate 60. FAD-binding positions include arginine 162, 272–293, and 315–334; these read HGTAYANFAVSECDLLIALGAR and DIDPAEIGKNRIPQLAIISD. Residues 407–486 are thiamine pyrophosphate binding; the sequence is QHQMWAAQFL…IKIFIINNQW (80 aa). Mg(2+) contacts are provided by aspartate 457 and asparagine 484.

Belongs to the TPP enzyme family. As to quaternary structure, dimer of large and small chains. Mg(2+) serves as cofactor. The cofactor is thiamine diphosphate.

Its subcellular location is the plastid. It localises to the chloroplast. It carries out the reaction 2 pyruvate + H(+) = (2S)-2-acetolactate + CO2. It functions in the pathway amino-acid biosynthesis; L-isoleucine biosynthesis; L-isoleucine from 2-oxobutanoate: step 1/4. It participates in amino-acid biosynthesis; L-valine biosynthesis; L-valine from pyruvate: step 1/4. This is Acetolactate synthase large subunit (ilvB) from Cyanidium caldarium (Red alga).